We begin with the raw amino-acid sequence, 338 residues long: Heat-inducible transcription repressor HrcA (338 aa).

Belongs to the HrcA family.

Negative regulator of class I heat shock genes (grpE-dnaK-dnaJ and groELS operons). Prevents heat-shock induction of these operons. In Bacillus cereus (strain B4264), this protein is Heat-inducible transcription repressor HrcA.